Reading from the N-terminus, the 223-residue chain is Small ribosomal subunit protein uS3 (223 aa).

In terms of domain architecture, KH type-2 spans 39–107 (VREFLHKKLA…PVQINIEEVR (69 aa)).

The protein belongs to the universal ribosomal protein uS3 family. In terms of assembly, part of the 30S ribosomal subunit. Forms a tight complex with proteins S10 and S14.

In terms of biological role, binds the lower part of the 30S subunit head. Binds mRNA in the 70S ribosome, positioning it for translation. The sequence is that of Small ribosomal subunit protein uS3 from Francisella tularensis subsp. mediasiatica (strain FSC147).